The following is a 218-amino-acid chain: Superoxide dismutase [Mn], mitochondrial (218 aa).

The transit peptide at 1–21 directs the protein to the mitochondrion; sequence MLRFLSKNSVAAIRNVSIARG. Mn(2+) is bound by residues His-50 and His-96. A Phosphoserine modification is found at Ser-129. Residues Asp-181 and His-185 each contribute to the Mn(2+) site.

It belongs to the iron/manganese superoxide dismutase family. As to quaternary structure, homodimer. The cofactor is Mn(2+).

Its subcellular location is the mitochondrion matrix. It carries out the reaction 2 superoxide + 2 H(+) = H2O2 + O2. Functionally, destroys superoxide anion radicals which are normally produced within the cells and which are toxic to biological systems. This is Superoxide dismutase [Mn], mitochondrial (sod2) from Schizosaccharomyces pombe (strain 972 / ATCC 24843) (Fission yeast).